The chain runs to 198 residues: FMN-dependent NADH:quinone oxidoreductase (198 aa).

Residues serine 10, 16-18, 94-97, and 138-141 each bind FMN; these read SQS, MYNF, and TRGG.

The protein belongs to the azoreductase type 1 family. Homodimer. The cofactor is FMN.

The enzyme catalyses 2 a quinone + NADH + H(+) = 2 a 1,4-benzosemiquinone + NAD(+). It carries out the reaction N,N-dimethyl-1,4-phenylenediamine + anthranilate + 2 NAD(+) = 2-(4-dimethylaminophenyl)diazenylbenzoate + 2 NADH + 2 H(+). Functionally, quinone reductase that provides resistance to thiol-specific stress caused by electrophilic quinones. Also exhibits azoreductase activity. Catalyzes the reductive cleavage of the azo bond in aromatic azo compounds to the corresponding amines. This Shewanella putrefaciens (strain CN-32 / ATCC BAA-453) protein is FMN-dependent NADH:quinone oxidoreductase.